The sequence spans 174 residues: Sarcoplasmic calcium-binding protein (174 aa).

S1 bears the N-acetylserine mark. 4 consecutive EF-hand domains span residues 3–38 (LWVQ…FAKE), 55–90 (GVWD…EAKS), 91–126 (VVEG…LGLD), and 127–160 (KTMA…FFMN). D16, D18, D20, and D27 together coordinate Ca(2+). The Ca(2+) site is built by D104, N106, D108, N110, E115, D138, N140, D142, and E149.

Functionally, like parvalbumins, SCPs seem to be more abundant in fast contracting muscles, but no functional relationship can be established from this distribution. This is Sarcoplasmic calcium-binding protein from Hediste diversicolor (Sandworm).